The following is a 740-amino-acid chain: Ribulose bisphosphate carboxylase, chloroplastic (740 aa).

The N-terminal 55 residues, 1 to 55 (MPSSSFTTGLALGAGALVGANAFVAPTAKTTNLRAPTQEASLQVAASQQTEQPAP), are a transit peptide targeting the chloroplast. A helical transmembrane segment spans residues 56-76 (STSALPWAFGAGACLALAAGG). Asparagine 213 lines the substrate pocket. Residue lysine 268 is the Proton acceptor of the active site. Position 270 (lysine 270) interacts with substrate. 3 residues coordinate Mg(2+): lysine 293, aspartate 295, and glutamate 296. At lysine 293 the chain carries N6-carboxylysine. Residue histidine 389 is the Proton acceptor of the active site. Positions 390, 423, and 470 each coordinate substrate.

It belongs to the RuBisCO large chain family. Type II subfamily. In terms of assembly, homodimer. Requires Mg(2+) as cofactor.

It localises to the plastid. The protein resides in the chloroplast membrane. It catalyses the reaction 2 (2R)-3-phosphoglycerate + 2 H(+) = D-ribulose 1,5-bisphosphate + CO2 + H2O. The catalysed reaction is D-ribulose 1,5-bisphosphate + O2 = 2-phosphoglycolate + (2R)-3-phosphoglycerate + 2 H(+). Its function is as follows. RuBisCO catalyzes two reactions: the carboxylation of D-ribulose 1,5-bisphosphate, the primary event in carbon dioxide fixation, as well as the oxidative fragmentation of the pentose substrate. Both reactions occur simultaneously and in competition at the same active site. The polypeptide is Ribulose bisphosphate carboxylase, chloroplastic (rbcL) (Heterocapsa triquetra (Dinoflagellate)).